The following is an 846-amino-acid chain: Translation initiation factor IF-2 (846 aa).

Residues 198–219 (YKREEEEKKSKAKKAGGKGFKK) are disordered. The segment covering 207 to 219 (SKAKKAGGKGFKK) has biased composition (basic residues). A tr-type G domain is found at 345–512 (SRAPVVTIMG…AVLLQSEVLE (168 aa)). Residues 354–361 (GHVDHGKT) are G1. Residue 354 to 361 (GHVDHGKT) participates in GTP binding. Positions 379 to 383 (GITQH) are G2. The tract at residues 400 to 403 (DTPG) is G3. GTP contacts are provided by residues 400-404 (DTPGH) and 454-457 (NKID). Positions 454 to 457 (NKID) are G4. The segment at 490–492 (SAK) is G5.

Belongs to the TRAFAC class translation factor GTPase superfamily. Classic translation factor GTPase family. IF-2 subfamily.

It localises to the cytoplasm. In terms of biological role, one of the essential components for the initiation of protein synthesis. Protects formylmethionyl-tRNA from spontaneous hydrolysis and promotes its binding to the 30S ribosomal subunits. Also involved in the hydrolysis of GTP during the formation of the 70S ribosomal complex. This is Translation initiation factor IF-2 from Francisella tularensis subsp. tularensis (strain SCHU S4 / Schu 4).